A 340-amino-acid chain; its full sequence is N-acetyl-gamma-glutamyl-phosphate reductase (340 aa).

Cysteine 148 is a catalytic residue.

The protein belongs to the NAGSA dehydrogenase family. Type 1 subfamily.

It is found in the cytoplasm. The catalysed reaction is N-acetyl-L-glutamate 5-semialdehyde + phosphate + NADP(+) = N-acetyl-L-glutamyl 5-phosphate + NADPH + H(+). It participates in amino-acid biosynthesis; L-arginine biosynthesis; N(2)-acetyl-L-ornithine from L-glutamate: step 3/4. In terms of biological role, catalyzes the NADPH-dependent reduction of N-acetyl-5-glutamyl phosphate to yield N-acetyl-L-glutamate 5-semialdehyde. The protein is N-acetyl-gamma-glutamyl-phosphate reductase of Methanosarcina mazei (strain ATCC BAA-159 / DSM 3647 / Goe1 / Go1 / JCM 11833 / OCM 88) (Methanosarcina frisia).